The following is a 294-amino-acid chain: Acetylglutamate kinase (294 aa).

Substrate contacts are provided by residues 63–64 (GG), Arg85, and Asn188.

It belongs to the acetylglutamate kinase family. ArgB subfamily.

Its subcellular location is the cytoplasm. It catalyses the reaction N-acetyl-L-glutamate + ATP = N-acetyl-L-glutamyl 5-phosphate + ADP. It functions in the pathway amino-acid biosynthesis; L-arginine biosynthesis; N(2)-acetyl-L-ornithine from L-glutamate: step 2/4. Catalyzes the ATP-dependent phosphorylation of N-acetyl-L-glutamate. The protein is Acetylglutamate kinase of Methanococcus vannielii (strain ATCC 35089 / DSM 1224 / JCM 13029 / OCM 148 / SB).